The primary structure comprises 133 residues: C-C motif chemokine 21b (133 aa).

A signal peptide spans 1-23; it reads MAQMMTLSLLSLVLALCIPWTQG. Disulfide bonds link C31–C57, C32–C75, and C103–C122. A disordered region spans residues 87–133; it reads MRRLDQPPAPGKQSPGCRKNRGTSKSGKKGKGSKGCKRTEQTQPSRG. Residues 98 to 133 form a C-terminal basic extension region; it reads KQSPGCRKNRGTSKSGKKGKGSKGCKRTEQTQPSRG. The span at 104-122 shows a compositional bias: basic residues; the sequence is RKNRGTSKSGKKGKGSKGC.

This sequence belongs to the intercrine beta (chemokine CC) family. Binds to CCR7 and to CXCR3. Interacts with PDPN; relocalizes PDPN to the basolateral membrane. Interacts with GPR174. As to expression, expressed strongly in lung, spleen, thymus, peripheral and mesentric lymph nodes. Also expressed in the testis, kidney, liver, and heart.

It localises to the secreted. Inhibits hemopoiesis and stimulates chemotaxis. Chemotactic in vitro for thymocytes and activated T-cells, but not for B-cells, macrophages, or neutrophils. Potent mesangial cell chemoattractant. Shows preferential activity towards naive T-cells. May play a role in mediating homing of lymphocytes to secondary lymphoid organs. In Mus musculus (Mouse), this protein is C-C motif chemokine 21b (Ccl21b).